The primary structure comprises 106 residues: Immunoglobulin lambda constant 2 (106 aa).

The Ig-like domain occupies 7 to 101; sequence PSVTLFPPSS…EGSTVEKTVA (95 aa). Cysteine 28 and cysteine 87 are oxidised to a cystine.

Immunoglobulins are composed of two identical heavy chains and two identical light chains; disulfide-linked.

The protein localises to the secreted. Its subcellular location is the cell membrane. Constant region of immunoglobulin light chains. Immunoglobulins, also known as antibodies, are membrane-bound or secreted glycoproteins produced by B lymphocytes. In the recognition phase of humoral immunity, the membrane-bound immunoglobulins serve as receptors which, upon binding of a specific antigen, trigger the clonal expansion and differentiation of B lymphocytes into immunoglobulins-secreting plasma cells. Secreted immunoglobulins mediate the effector phase of humoral immunity, which results in the elimination of bound antigens. The antigen binding site is formed by the variable domain of one heavy chain, together with that of its associated light chain. Thus, each immunoglobulin has two antigen binding sites with remarkable affinity for a particular antigen. The variable domains are assembled by a process called V-(D)-J rearrangement and can then be subjected to somatic hypermutations which, after exposure to antigen and selection, allow affinity maturation for a particular antigen. The polypeptide is Immunoglobulin lambda constant 2 (Homo sapiens (Human)).